The following is a 542-amino-acid chain: Chondroitin sulfate N-acetylgalactosaminyltransferase 2 (542 aa).

Over 1 to 13 (MSRRGSILHSRTQ) the chain is Cytoplasmic. Residues 14–34 (WLLLGLALLFSLVLFMYLLEC) traverse the membrane as a helical; Signal-anchor for type II membrane protein segment. Over 35-542 (APQTDGNASL…AYRTNSETAG (508 aa)) the chain is Lumenal. A glycan (N-linked (GlcNAc...) asparagine) is linked at Asn-41. Positions 59-105 (ALLQEQEEHYQTRATSLKRQIAQLKQELQDMSEKMRALQERKKLGAN) form a coiled coil. Asn-333 carries N-linked (GlcNAc...) asparagine glycosylation. Positions 369 and 486 each coordinate a divalent metal cation.

The protein belongs to the chondroitin N-acetylgalactosaminyltransferase family.

It is found in the golgi apparatus. It localises to the golgi stack membrane. It carries out the reaction 3-O-(beta-D-GlcA-(1-&gt;3)-beta-D-Gal-(1-&gt;3)-beta-D-Gal-(1-&gt;4)-beta-D-Xyl)-L-seryl-[protein] + UDP-N-acetyl-alpha-D-galactosamine = 3-O-(beta-D-GalNAc-(1-&gt;4)-beta-D-GlcA-(1-&gt;3)-beta-D-Gal-(1-&gt;3)-beta-D-Gal-(1-&gt;4)-beta-D-Xyl)-L-seryl-[protein] + UDP + H(+). In terms of biological role, transfers 1,4-N-acetylgalactosamine (GalNAc) from UDP-GalNAc to the non-reducing end of glucuronic acid (GlcUA). Required for addition of the first GalNAc to the core tetrasaccharide linker and for elongation of chondroitin chains. The chain is Chondroitin sulfate N-acetylgalactosaminyltransferase 2 (Csgalnact2) from Mus musculus (Mouse).